We begin with the raw amino-acid sequence, 497 residues long: Glutamate--tRNA ligase (497 aa).

A 'HIGH' region motif is present at residues 13-23; sequence PSPTGTPHVGM. Positions 257-261 match the 'KMSKS' region motif; it reads KLSKR. Lys-260 is an ATP binding site.

Belongs to the class-I aminoacyl-tRNA synthetase family. Glutamate--tRNA ligase type 1 subfamily. Monomer.

Its subcellular location is the cytoplasm. It carries out the reaction tRNA(Glu) + L-glutamate + ATP = L-glutamyl-tRNA(Glu) + AMP + diphosphate. Catalyzes the attachment of glutamate to tRNA(Glu) in a two-step reaction: glutamate is first activated by ATP to form Glu-AMP and then transferred to the acceptor end of tRNA(Glu). The chain is Glutamate--tRNA ligase from Corynebacterium diphtheriae (strain ATCC 700971 / NCTC 13129 / Biotype gravis).